A 444-amino-acid chain; its full sequence is Chromosome partition protein MukF (444 aa).

The leucine-zipper stretch occupies residues 212–240; the sequence is LDETSGNLRELQDTLNAAGDKLQAQLLRI.

Belongs to the MukF family. Interacts, and probably forms a ternary complex, with MukE and MukB via its C-terminal region. The complex formation is stimulated by calcium or magnesium. It is required for an interaction between MukE and MukB.

Its subcellular location is the cytoplasm. It is found in the nucleoid. In terms of biological role, involved in chromosome condensation, segregation and cell cycle progression. May participate in facilitating chromosome segregation by condensation DNA from both sides of a centrally located replisome during cell division. Not required for mini-F plasmid partitioning. Probably acts via its interaction with MukB and MukE. Overexpression results in anucleate cells. It has a calcium binding activity. This chain is Chromosome partition protein MukF, found in Haemophilus influenzae (strain PittEE).